The primary structure comprises 133 residues: MQRVTITLDDDLLETLDSLSQRRGYNNRSEAIRDILRGALAQETAQQHGTQGFAVLSYVYEHEKRDLARRLVSTQHHHHDLSVATLHVHVSHEDCLEIAVLKGDMGDIQHFADDVIAQRGVRHGHLQCLPDDE.

Positions 76, 87, 89, and 95 each coordinate Ni(2+).

This sequence belongs to the transcriptional regulatory CopG/NikR family. As to quaternary structure, homotetramer. Requires Ni(2+) as cofactor.

In terms of biological role, transcriptional repressor of the nikABCDE operon. Is active in the presence of excessive concentrations of intracellular nickel. The chain is Nickel-responsive regulator from Enterobacter sp. (strain 638).